Consider the following 570-residue polypeptide: Phosphoenolpyruvate-protein phosphotransferase (570 aa).

The active-site Tele-phosphohistidine intermediate is His-189. Phosphoenolpyruvate-binding residues include Arg-296 and Arg-332. Mg(2+) contacts are provided by Glu-431 and Asp-455. Phosphoenolpyruvate is bound by residues 454–455 and Arg-465; that span reads ND. The active-site Proton donor is the Cys-502.

This sequence belongs to the PEP-utilizing enzyme family. In terms of assembly, homodimer. The cofactor is Mg(2+).

Its subcellular location is the cytoplasm. The catalysed reaction is L-histidyl-[protein] + phosphoenolpyruvate = N(pros)-phospho-L-histidyl-[protein] + pyruvate. General (non sugar-specific) component of the phosphoenolpyruvate-dependent sugar phosphotransferase system (sugar PTS). This major carbohydrate active-transport system catalyzes the phosphorylation of incoming sugar substrates concomitantly with their translocation across the cell membrane. Enzyme I transfers the phosphoryl group from phosphoenolpyruvate (PEP) to the phosphoryl carrier protein (HPr). This is Phosphoenolpyruvate-protein phosphotransferase (ptsI) from Buchnera aphidicola subsp. Schizaphis graminum (strain Sg).